An 863-amino-acid chain; its full sequence is DNA mismatch repair protein MutS (863 aa).

Position 615–622 (615–622 (GPNMAGKS)) interacts with ATP.

It belongs to the DNA mismatch repair MutS family.

This protein is involved in the repair of mismatches in DNA. It is possible that it carries out the mismatch recognition step. This protein has a weak ATPase activity. The sequence is that of DNA mismatch repair protein MutS from Pelotomaculum thermopropionicum (strain DSM 13744 / JCM 10971 / SI).